A 535-amino-acid chain; its full sequence is MAQPGRASLKEQRYDRQLRLWGDHGQEALESAHVCVINATATGTEILKNLVLPGIGSFTIVDGNRVSGEDVGNNFFLQKSHIGQSRAQSATELLQELNNDVSGNFVEESPETLLDNDPSFFNRFNLVVATQLSESTVLRLAELLWNSNIPLLICRTYGLVGYMRIIIKEHPVVESHPDNALEDLRLDKQFPELTEHIQSYDLDHMDKKDHSHTPWIVIVAKYLTKWFNEKSDQLPKSYKEKEAFRQLIRQGILKNENGTPEDEENFEEAIKNVNTALNTTKIPRCIEEIFNDDCCVNLTEQSPSFWILVRAVKEFVANEGQGCLPVRGTIPDMIADSSKFIKLQNVYREKAKRDIAAVGNHAAKLLQSLGKAPESISERELKLLCSNSAFLRVVRCRSLSEEYGLNTFNKDEIISNMDNPDSEVVLYLMLRAVDRFYKQHGRYPGVYNYQVEDDIGKLKSCLTSFLQEHGLSVLVKDDYVHEFCRYGAAEPHAIAAFMGGAAAQEIIKVITGQFVIFNNTYIYSGMSQTSATFQL.

Residues 332 to 345 form an interaction with UBA3 region; the sequence is DMIADSSKFIKLQN.

The protein belongs to the ubiquitin-activating E1 family. ULA1 subfamily. In terms of assembly, heterodimer of UBA3 and NAE1. The complex binds NEDD8 and UBE2M.

Its pathway is protein modification; protein neddylation. Functionally, regulatory subunit of the dimeric UBA3-NAE1 E1 enzyme. E1 activates NEDD8 by first adenylating its C-terminal glycine residue with ATP, thereafter linking this residue to the side chain of the catalytic cysteine, yielding a NEDD8-UBA3 thioester and free AMP. E1 finally transfers NEDD8 to the catalytic cysteine of UBE2M. The covalent attachment of NEDD8 to target proteins is known as 'neddylation' and the process is involved in the regulation of cell growth, viability and development. In Gallus gallus (Chicken), this protein is NEDD8-activating enzyme E1 regulatory subunit (NAE1).